Here is a 268-residue protein sequence, read N- to C-terminus: Acyl-CoA-binding domain-containing protein 4 (268 aa).

One can recognise an ACB domain in the interval 12-101 (CQKQFQAAVS…MKLVAQKVID (90 aa)). Residues 23 to 32 (IQNLPKNGSY), 43 to 47 (YSYYK), K69, and Y88 contribute to the an acyl-CoA site. Positions 151-175 (AVSEPPCLPKEPAPPSPESHSPRDL) are disordered. Over residues 156–167 (PCLPKEPAPPSP) the composition is skewed to pro residues. A phosphoserine mark is found at S166 and S171.

Binds medium- and long-chain acyl-CoA esters and may function as an intracellular carrier of acyl-CoA esters. The sequence is that of Acyl-CoA-binding domain-containing protein 4 (ACBD4) from Homo sapiens (Human).